Consider the following 240-residue polypeptide: HTH-type transcriptional repressor STM4068 (240 aa).

The HTH gntR-type domain maps to 9 to 77 (TPLYKQLFFI…RGSGSVVCSV (69 aa)). Positions 37-56 (QKEIARSYNVSLIVVKQAWS) form a DNA-binding region, H-T-H motif.

Represses the expression of the STM4065-STM4067 operon. The chain is HTH-type transcriptional repressor STM4068 from Salmonella typhimurium (strain LT2 / SGSC1412 / ATCC 700720).